Reading from the N-terminus, the 103-residue chain is Large ribosomal subunit protein bL21 (103 aa).

This sequence belongs to the bacterial ribosomal protein bL21 family. In terms of assembly, part of the 50S ribosomal subunit. Contacts protein L20.

This protein binds to 23S rRNA in the presence of protein L20. This is Large ribosomal subunit protein bL21 from Acinetobacter baylyi (strain ATCC 33305 / BD413 / ADP1).